Here is a 964-residue protein sequence, read N- to C-terminus: Vitamin B12-dependent ribonucleotide reductase (964 aa).

The tract at residues 1 to 21 (MTETASGPARGSRAKGTKAKG) is disordered. The segment covering 12–21 (SRAKGTKAKG) has biased composition (basic residues). Substrate contacts are provided by residues S142, 158–159 (AC), G187, 363–367 (NPCSE), and 553–557 (PTGTI). C159 and C376 are oxidised to a cystine. N363 functions as the Proton acceptor in the catalytic mechanism. C365 acts as the Cysteine radical intermediate in catalysis. E367 serves as the catalytic Proton acceptor.

The protein belongs to the ribonucleoside diphosphate reductase class-2 family. Adenosylcob(III)alamin is required as a cofactor.

It carries out the reaction a 2'-deoxyribonucleoside 5'-diphosphate + [thioredoxin]-disulfide + H2O = a ribonucleoside 5'-diphosphate + [thioredoxin]-dithiol. Functionally, catalyzes the reduction of ribonucleotides to deoxyribonucleotides. May function to provide a pool of deoxyribonucleotide precursors for DNA repair during oxygen limitation and/or for immediate growth after restoration of oxygen. This chain is Vitamin B12-dependent ribonucleotide reductase (nrdJ), found in Streptomyces avermitilis (strain ATCC 31267 / DSM 46492 / JCM 5070 / NBRC 14893 / NCIMB 12804 / NRRL 8165 / MA-4680).